We begin with the raw amino-acid sequence, 254 residues long: Phosphate import ATP-binding protein PstB 2 (254 aa).

Residues 9 to 249 (FNIDNLNLFY…PRDDRTRGYV (241 aa)) enclose the ABC transporter domain. Residue 41–48 (GPSGCGKS) participates in ATP binding.

Belongs to the ABC transporter superfamily. Phosphate importer (TC 3.A.1.7) family. The complex is composed of two ATP-binding proteins (PstB), two transmembrane proteins (PstC and PstA) and a solute-binding protein (PstS).

It is found in the cell inner membrane. The enzyme catalyses phosphate(out) + ATP + H2O = ADP + 2 phosphate(in) + H(+). Its function is as follows. Part of the ABC transporter complex PstSACB involved in phosphate import. Responsible for energy coupling to the transport system. In Photobacterium profundum (strain SS9), this protein is Phosphate import ATP-binding protein PstB 2.